A 240-amino-acid chain; its full sequence is tRNA (guanine-N(7)-)-methyltransferase (240 aa).

Residues Glu71, Glu96, Asp123, and Asp146 each contribute to the S-adenosyl-L-methionine site. Asp146 is an active-site residue. Residues Lys150, Asp182, and Thr219 to Glu222 each bind substrate.

The protein belongs to the class I-like SAM-binding methyltransferase superfamily. TrmB family.

The catalysed reaction is guanosine(46) in tRNA + S-adenosyl-L-methionine = N(7)-methylguanosine(46) in tRNA + S-adenosyl-L-homocysteine. It participates in tRNA modification; N(7)-methylguanine-tRNA biosynthesis. In terms of biological role, catalyzes the formation of N(7)-methylguanine at position 46 (m7G46) in tRNA. This chain is tRNA (guanine-N(7)-)-methyltransferase, found in Hydrogenovibrio crunogenus (strain DSM 25203 / XCL-2) (Thiomicrospira crunogena).